Reading from the N-terminus, the 243-residue chain is Glutathione S-transferase U14 (243 aa).

A GST N-terminal domain is found at 5 to 87 (DTVKLIGCSD…YLDEAWPSDP (83 aa)). Glutathione is bound by residues 15–16 (DP), 44–45 (EK), 58–59 (KT), and 71–72 (ES). The GST C-terminal domain maps to 93 to 220 (NAYDRASARF…MPTVEEVTEL (128 aa)). Thr159 carries the phosphothreonine modification.

This sequence belongs to the GST superfamily. Tau family.

The protein resides in the cytoplasm. The protein localises to the cytosol. It catalyses the reaction RX + glutathione = an S-substituted glutathione + a halide anion + H(+). Functionally, may be involved in the conjugation of reduced glutathione to a wide number of exogenous and endogenous hydrophobic electrophiles and have a detoxification role against certain herbicides. The polypeptide is Glutathione S-transferase U14 (GSTU14) (Arabidopsis thaliana (Mouse-ear cress)).